The chain runs to 876 residues: Alanine--tRNA ligase (876 aa).

Zn(2+) is bound by residues H562, H566, C666, and H670.

It belongs to the class-II aminoacyl-tRNA synthetase family. Zn(2+) serves as cofactor.

The protein resides in the cytoplasm. It catalyses the reaction tRNA(Ala) + L-alanine + ATP = L-alanyl-tRNA(Ala) + AMP + diphosphate. Catalyzes the attachment of alanine to tRNA(Ala) in a two-step reaction: alanine is first activated by ATP to form Ala-AMP and then transferred to the acceptor end of tRNA(Ala). Also edits incorrectly charged Ser-tRNA(Ala) and Gly-tRNA(Ala) via its editing domain. The polypeptide is Alanine--tRNA ligase (Marinobacter nauticus (strain ATCC 700491 / DSM 11845 / VT8) (Marinobacter aquaeolei)).